The following is a 238-amino-acid chain: Orotidine 5'-phosphate decarboxylase (238 aa).

Residues Asp11, Lys32, 59–68, Thr123, Arg185, Gln194, Gly214, and Arg215 each bind substrate; that span reads DLKFHDIPNT. Lys61 functions as the Proton donor in the catalytic mechanism.

It belongs to the OMP decarboxylase family. Type 1 subfamily. As to quaternary structure, homodimer.

The catalysed reaction is orotidine 5'-phosphate + H(+) = UMP + CO2. It participates in pyrimidine metabolism; UMP biosynthesis via de novo pathway; UMP from orotate: step 2/2. Functionally, catalyzes the decarboxylation of orotidine 5'-monophosphate (OMP) to uridine 5'-monophosphate (UMP). The protein is Orotidine 5'-phosphate decarboxylase of Nostoc sp. (strain PCC 7120 / SAG 25.82 / UTEX 2576).